We begin with the raw amino-acid sequence, 391 residues long: Multidrug resistance protein MdtL (391 aa).

The next 12 helical transmembrane spans lie at 4–24, 42–62, 69–89, 93–113, 131–151, 158–178, 203–222, 245–265, 269–289, 293–313, 331–351, and 356–376; these read FLIC…MYLV, IAFS…GKVA, PVAI…SLAE, LFLA…VVAF, LLNG…HLIM, SLFW…LFIL, FFLS…LTFV, ALTA…LGIF, TLMI…AVSP, VSLF…GVAM, LGIA…VVGI, and MLIG…MFVA.

This sequence belongs to the major facilitator superfamily. DHA1 family. MdtL (TC 2.A.1.2.22) subfamily.

Its subcellular location is the cell inner membrane. Confers resistance to chloramphenicol. The chain is Multidrug resistance protein MdtL from Escherichia coli O139:H28 (strain E24377A / ETEC).